Here is a 166-residue protein sequence, read N- to C-terminus: Interferon gamma (166 aa).

An N-terminal signal peptide occupies residues 1 to 23; sequence MKYTSYFLALLLCVLLGFSGSYG. Glutamine 24 is modified (pyrrolidone carboxylic acid). Asparagine 39 and asparagine 106 each carry an N-linked (GlcNAc...) asparagine glycan.

It belongs to the type II (or gamma) interferon family. In terms of assembly, homodimer. Interacts with IFNGR1 (via extracellular domain); this interaction promotes IFNGR1 dimerization. As to expression, released primarily from activated T lymphocytes.

The protein resides in the secreted. Functionally, type II interferon produced by immune cells such as T-cells and NK cells that plays crucial roles in antimicrobial, antiviral, and antitumor responses by activating effector immune cells and enhancing antigen presentation. Primarily signals through the JAK-STAT pathway after interaction with its receptor IFNGR1 to affect gene regulation. Upon IFNG binding, IFNGR1 intracellular domain opens out to allow association of downstream signaling components JAK2, JAK1 and STAT1, leading to STAT1 activation, nuclear translocation and transcription of IFNG-regulated genes. Many of the induced genes are transcription factors such as IRF1 that are able to further drive regulation of a next wave of transcription. Plays a role in class I antigen presentation pathway by inducing a replacement of catalytic proteasome subunits with immunoproteasome subunits. In turn, increases the quantity, quality, and repertoire of peptides for class I MHC loading. Increases the efficiency of peptide generation also by inducing the expression of activator PA28 that associates with the proteasome and alters its proteolytic cleavage preference. Up-regulates as well MHC II complexes on the cell surface by promoting expression of several key molecules such as cathepsins B/CTSB, H/CTSH, and L/CTSL. Participates in the regulation of hematopoietic stem cells during development and under homeostatic conditions by affecting their development, quiescence, and differentiation. This chain is Interferon gamma (IFNG), found in Bos indicus (Zebu).